The following is a 341-amino-acid chain: Phenylalanine--tRNA ligase alpha subunit (341 aa).

E254 serves as a coordination point for Mg(2+).

The protein belongs to the class-II aminoacyl-tRNA synthetase family. Phe-tRNA synthetase alpha subunit type 1 subfamily. As to quaternary structure, tetramer of two alpha and two beta subunits. Mg(2+) is required as a cofactor.

It is found in the cytoplasm. The enzyme catalyses tRNA(Phe) + L-phenylalanine + ATP = L-phenylalanyl-tRNA(Phe) + AMP + diphosphate + H(+). This Chlorobium phaeobacteroides (strain DSM 266 / SMG 266 / 2430) protein is Phenylalanine--tRNA ligase alpha subunit.